Here is a 287-residue protein sequence, read N- to C-terminus: 33 kDa chaperonin (287 aa).

Intrachain disulfides connect cysteine 233–cysteine 235 and cysteine 266–cysteine 269.

This sequence belongs to the HSP33 family. Post-translationally, under oxidizing conditions two disulfide bonds are formed involving the reactive cysteines. Under reducing conditions zinc is bound to the reactive cysteines and the protein is inactive.

Its subcellular location is the cytoplasm. In terms of biological role, redox regulated molecular chaperone. Protects both thermally unfolding and oxidatively damaged proteins from irreversible aggregation. Plays an important role in the bacterial defense system toward oxidative stress. This is 33 kDa chaperonin from Thermodesulfovibrio yellowstonii (strain ATCC 51303 / DSM 11347 / YP87).